Here is a 585-residue protein sequence, read N- to C-terminus: Suppressor of mec-8 and unc-52 protein homolog 2 (585 aa).

Residues 1 to 14 (MKPSKSHHKEKTAR) are compositionally biased toward basic residues. Disordered regions lie at residues 1 to 52 (MKPS…SSFH) and 219 to 324 (KKKK…PRDK). Residues 15-39 (RREEKLEESDNPKYRDRAKERRENQ) are compositionally biased toward basic and acidic residues. R-[ED] repeat units follow at residues 16–17 (RE), 29–30 (RD), 36–37 (RE), and 258–259 (RE). Over residues 276 to 288 (LSTKQEEPPVART) the composition is skewed to basic and acidic residues. R-[ED] repeat units lie at residues 322 to 323 (RD), 436 to 437 (RD), 445 to 446 (RE), 450 to 451 (RE), 540 to 541 (RD), and 542 to 543 (RD). Positions 523 to 585 (FQFGVKMQDG…EAQTPKRSKH (63 aa)) are disordered. Over residues 530-548 (QDGRKTRKQNRDRDQKLNN) the composition is skewed to basic and acidic residues. T579 carries the post-translational modification Phosphothreonine.

It belongs to the RED family. In terms of assembly, component of the spliceosome. Interacts with SMU1. Highly expressed in seedlings at 7 days after germination, young flowers before anthesis and developing siliques. Expressed at lower levels in roots, expanding leaves, open flowers, dry seeds and inflorescences. Not detected in senescing leaves.

The protein localises to the nucleus. Its function is as follows. Auxiliary spliceosomal protein involved in splicing of specific pre-mRNAs that affect multiple aspects of development. The chain is Suppressor of mec-8 and unc-52 protein homolog 2 (SMU2) from Arabidopsis thaliana (Mouse-ear cress).